An 89-amino-acid chain; its full sequence is U-scoloptoxin(11)-Sm4a (89 aa).

Positions 1 to 17 (MFFKLVLVSAVAIQALS) are cleaved as a signal peptide.

Belongs to the scoloptoxin-11 family. Contains 3 disulfide bonds. In terms of tissue distribution, expressed by the venom gland.

The protein resides in the secreted. The sequence is that of U-scoloptoxin(11)-Sm4a from Scolopendra morsitans (Tanzanian blue ringleg centipede).